The chain runs to 40 residues: Photosystem II reaction center protein J (40 aa).

Residues 8-28 (IPLWLIGTVTGTLVIGLIGIF) form a helical membrane-spanning segment.

This sequence belongs to the PsbJ family. As to quaternary structure, PSII is composed of 1 copy each of membrane proteins PsbA, PsbB, PsbC, PsbD, PsbE, PsbF, PsbH, PsbI, PsbJ, PsbK, PsbL, PsbM, PsbT, PsbX, PsbY, PsbZ, Psb30/Ycf12, at least 3 peripheral proteins of the oxygen-evolving complex and a large number of cofactors. It forms dimeric complexes.

Its subcellular location is the plastid. It is found in the chloroplast thylakoid membrane. In terms of biological role, one of the components of the core complex of photosystem II (PSII). PSII is a light-driven water:plastoquinone oxidoreductase that uses light energy to abstract electrons from H(2)O, generating O(2) and a proton gradient subsequently used for ATP formation. It consists of a core antenna complex that captures photons, and an electron transfer chain that converts photonic excitation into a charge separation. The chain is Photosystem II reaction center protein J from Cycas taitungensis (Prince sago).